Reading from the N-terminus, the 469-residue chain is Calcium-binding mitochondrial carrier protein SCaMC-2-A (469 aa).

Residues Met1–His189 are Mitochondrial intermembrane-facing. EF-hand domains follow at residues Thr47 to Glu80, Asp78 to His113, and Ile114 to Glu149. Ca(2+) contacts are provided by Asp64, Gln66, and Glu71. 3 Solcar repeats span residues Gly184 to Val270, Leu278 to Thr363, and Pro375 to Thr463. A helical membrane pass occupies residues Leu190–Leu207. Topologically, residues Asp208–Arg244 are mitochondrial matrix. The chain crosses the membrane as a helical span at residues Gly245–Tyr264. Over Glu265 to Gly287 the chain is Mitochondrial intermembrane. A helical transmembrane segment spans residues Ser288 to Met301. At Glu302 to Lys337 the chain is on the mitochondrial matrix side. Residues Gly338 to Tyr357 traverse the membrane as a helical segment. Topologically, residues Glu358–Leu380 are mitochondrial intermembrane. A helical membrane pass occupies residues Leu381–Leu398. Topologically, residues Ala399–Arg437 are mitochondrial matrix. The helical transmembrane segment at Gly438 to Tyr457 threads the bilayer. Residues Glu458–Arg469 are Mitochondrial intermembrane-facing.

It belongs to the mitochondrial carrier (TC 2.A.29) family.

The protein resides in the mitochondrion inner membrane. Calcium-dependent mitochondrial solute carrier. The protein is Calcium-binding mitochondrial carrier protein SCaMC-2-A (slc25a25a) of Danio rerio (Zebrafish).